We begin with the raw amino-acid sequence, 461 residues long: Putative 2,3-dihydroxypropane-1-sulfonate exporter (461 aa).

Topologically, residues Met-1 to Leu-20 are cytoplasmic. The helical transmembrane segment at Ser-21 to Leu-41 threads the bilayer. The Periplasmic segment spans residues Lys-42 to Val-47. A helical transmembrane segment spans residues Leu-48–Phe-68. The Cytoplasmic segment spans residues Thr-69–Phe-92. The helical transmembrane segment at Ile-93–Phe-113 threads the bilayer. At Asp-114–Thr-123 the chain is on the periplasmic side. The chain crosses the membrane as a helical span at residues Ile-124–Val-144. At Pro-145 to Gln-162 the chain is on the cytoplasmic side. Residues Gly-163–Ile-183 traverse the membrane as a helical segment. Residues Glu-184 to Gln-188 are Periplasmic-facing. A helical transmembrane segment spans residues Leu-189–Cys-209. At Tyr-210–Pro-243 the chain is on the cytoplasmic side. Residues Leu-244 to Ile-264 form a helical membrane-spanning segment. The Periplasmic portion of the chain corresponds to Gln-265–Pro-276. Residues Ile-277 to Met-297 form a helical membrane-spanning segment. Over Pro-298–Lys-308 the chain is Cytoplasmic. Residues Val-309–Gly-329 traverse the membrane as a helical segment. Residue Gly-330 is a topological domain, periplasmic. A helical transmembrane segment spans residues Ser-331–Leu-351. At Asn-352–Gln-387 the chain is on the cytoplasmic side. The chain crosses the membrane as a helical span at residues Ala-388–Ala-408. The Periplasmic portion of the chain corresponds to Gln-409–Gln-419. The helical transmembrane segment at Leu-420 to Tyr-440 threads the bilayer. At Ser-441–Ala-461 the chain is on the cytoplasmic side.

Belongs to the sodium:galactoside symporter (TC 2.A.2) family.

It is found in the cell inner membrane. In terms of biological role, could be involved in the export of 2,3-dihydroxypropane-1-sulfonate (DHPS). This is Putative 2,3-dihydroxypropane-1-sulfonate exporter (yihP) from Escherichia coli (strain K12).